The chain runs to 115 residues: Migration and invasion enhancer 1 (115 aa).

Residues 1-10 (MSGDTGTTSV) show a composition bias toward polar residues. The disordered stretch occupies residues 1-22 (MSGDTGTTSVAPPPGETEPGHG). S2 is modified (N-acetylserine). C30 and C33 form a disulfide bridge. C112 carries S-geranylgeranyl cysteine lipidation. Positions 113–115 (VIL) are cleaved as a propeptide — removed in mature form.

The protein belongs to the SelWTH family. Interacts with GPX1. In terms of processing, isoprenylation facilitates association with the plasma membrane and enhances the migratory phenotype of cells by inducing increased filopodia formation.

Its subcellular location is the cytoplasm. It localises to the cytosol. The protein localises to the cell membrane. Increases cell migration by inducing filopodia formation at the leading edge of migrating cells. Plays a role in regulation of apoptosis, possibly through control of CASP3. May be involved in a redox-related process. In Bos taurus (Bovine), this protein is Migration and invasion enhancer 1 (MIEN1).